Consider the following 383-residue polypeptide: DNA dC-&gt;dU-editing enzyme APOBEC-3G (383 aa).

The essential for cytoplasmic localization stretch occupies residues 1 to 60 (MKPQFRNTVERMYRDTFFYNFNNRPILSRRNTVWLCYEVKTRGPSMPTWDAKIFRGQVYS). CMP/dCMP-type deaminase domains follow at residues 29-138 (RRNT…LRVL) and 214-327 (GQHE…LRTL). Phosphothreonine; by PKA is present on threonine 32. Zn(2+)-binding residues include histidine 65, cysteine 97, and cysteine 100. The interval 209-335 (KPWVSGQHET…TLHRDGAKIA (127 aa)) is necessary for homooligomerization. The segment at 213 to 215 (SGQ) is interaction with DNA. The residue at position 218 (threonine 218) is a Phosphothreonine; by PKA and CAMK2. Histidine 257 serves as a coordination point for Zn(2+). Glutamate 259 serves as the catalytic Proton donor. The Zn(2+) site is built by cysteine 287 and cysteine 290. An interaction with DNA region spans residues 312–319 (RIYDDQGR).

This sequence belongs to the cytidine and deoxycytidylate deaminase family. As to quaternary structure, homodimer. It depends on Zn(2+) as a cofactor.

The protein resides in the cytoplasm. Its subcellular location is the nucleus. It localises to the P-body. The catalysed reaction is a 2'-deoxycytidine in single-stranded DNA + H2O + H(+) = a 2'-deoxyuridine in single-stranded DNA + NH4(+). Functionally, DNA deaminase (cytidine deaminase) which acts as an inhibitor of retrovirus replication and retrotransposon mobility. After the penetration of retroviral nucleocapsids into target cells of infection and the initiation of reverse transcription, it can induce the conversion of cytosine to uracil in the minus-sense single-strand viral DNA, leading to G-to-A hypermutations in the subsequent plus-strand viral DNA. The resultant detrimental levels of mutations in the proviral genome, along with a deamination-independent mechanism that works prior to the proviral integration, together exert efficient antiretroviral effects in infected target cells. Selectively targets single-stranded DNA and does not deaminate double-stranded DNA or single- or double-stranded RNA. In Papio anubis (Olive baboon), this protein is DNA dC-&gt;dU-editing enzyme APOBEC-3G (APOBEC3G).